Consider the following 306-residue polypeptide: Porphobilinogen deaminase (306 aa).

An S-(dipyrrolylmethanemethyl)cysteine modification is found at Cys-234.

Belongs to the HMBS family. As to quaternary structure, monomer. Dipyrromethane is required as a cofactor.

The enzyme catalyses 4 porphobilinogen + H2O = hydroxymethylbilane + 4 NH4(+). The protein operates within porphyrin-containing compound metabolism; protoporphyrin-IX biosynthesis; coproporphyrinogen-III from 5-aminolevulinate: step 2/4. In terms of biological role, tetrapolymerization of the monopyrrole PBG into the hydroxymethylbilane pre-uroporphyrinogen in several discrete steps. The polypeptide is Porphobilinogen deaminase (Mycobacteroides abscessus (strain ATCC 19977 / DSM 44196 / CCUG 20993 / CIP 104536 / JCM 13569 / NCTC 13031 / TMC 1543 / L948) (Mycobacterium abscessus)).